The following is a 338-amino-acid chain: MEERILTQNFTQEDATEYSLRPRWLSEYIGQEKIKQELKIYIEAAKKRGEPLDHVLLYGPPGLGKTTLATVISNEMGVGIKITSGPAIERSGDLAAILTNLQENDILFIDEIHRLNRSVEEILYPAMEDFELDIVIGKGPSARSIRLSLPKFTLIGATTRAALMTSPLRSRFGVINRLDYYSVEELKEIIKRSANILNIGIDEDAAFEIARRSRGTPRIANRLLKRVRDFAEVKGNGYIDYNTANIALNMLGVDEMGLEEIDRKILIAIIEKFGGGPVGIDAIAASVGEDGDTIEDMYEPYLMQIGFLNRTPRGRVVTKLAYQYLKYPYVEQRRIEDV.

Positions 1–181 are large ATPase domain (RuvB-L); that stretch reads MEERILTQNF…FGVINRLDYY (181 aa). Residues L20, R21, G62, K65, T66, T67, 128–130, R171, Y181, and R218 each bind ATP; that span reads EDF. Position 66 (T66) interacts with Mg(2+). The interval 182–252 is small ATPAse domain (RuvB-S); it reads SVEELKEIIK…TANIALNMLG (71 aa). Residues 255–338 are head domain (RuvB-H); the sequence is EMGLEEIDRK…YVEQRRIEDV (84 aa). DNA is bound by residues R310 and R315.

It belongs to the RuvB family. As to quaternary structure, homohexamer. Forms an RuvA(8)-RuvB(12)-Holliday junction (HJ) complex. HJ DNA is sandwiched between 2 RuvA tetramers; dsDNA enters through RuvA and exits via RuvB. An RuvB hexamer assembles on each DNA strand where it exits the tetramer. Each RuvB hexamer is contacted by two RuvA subunits (via domain III) on 2 adjacent RuvB subunits; this complex drives branch migration. In the full resolvosome a probable DNA-RuvA(4)-RuvB(12)-RuvC(2) complex forms which resolves the HJ.

It localises to the cytoplasm. The catalysed reaction is ATP + H2O = ADP + phosphate + H(+). In terms of biological role, the RuvA-RuvB-RuvC complex processes Holliday junction (HJ) DNA during genetic recombination and DNA repair, while the RuvA-RuvB complex plays an important role in the rescue of blocked DNA replication forks via replication fork reversal (RFR). RuvA specifically binds to HJ cruciform DNA, conferring on it an open structure. The RuvB hexamer acts as an ATP-dependent pump, pulling dsDNA into and through the RuvAB complex. RuvB forms 2 homohexamers on either side of HJ DNA bound by 1 or 2 RuvA tetramers; 4 subunits per hexamer contact DNA at a time. Coordinated motions by a converter formed by DNA-disengaged RuvB subunits stimulates ATP hydrolysis and nucleotide exchange. Immobilization of the converter enables RuvB to convert the ATP-contained energy into a lever motion, pulling 2 nucleotides of DNA out of the RuvA tetramer per ATP hydrolyzed, thus driving DNA branch migration. The RuvB motors rotate together with the DNA substrate, which together with the progressing nucleotide cycle form the mechanistic basis for DNA recombination by continuous HJ branch migration. Branch migration allows RuvC to scan DNA until it finds its consensus sequence, where it cleaves and resolves cruciform DNA. This chain is Holliday junction branch migration complex subunit RuvB, found in Caldanaerobacter subterraneus subsp. tengcongensis (strain DSM 15242 / JCM 11007 / NBRC 100824 / MB4) (Thermoanaerobacter tengcongensis).